The following is a 485-amino-acid chain: Auxin transporter protein 1 (485 aa).

The Cytoplasmic portion of the chain corresponds to Met1–Gln59. Polar residues predominate over residues Asp12 to Arg22. A disordered region spans residues Asp12–Ser33. Residues Thr23 to Gly32 show a composition bias toward basic and acidic residues. The chain crosses the membrane as a helical span at residues Val60–Leu77. The Extracellular portion of the chain corresponds to Ser78–Gly79. Residues Ile80–Leu100 traverse the membrane as a helical segment. At Tyr101–Lys135 the chain is on the cytoplasmic side. Residues Ala136 to Ala156 traverse the membrane as a helical segment. Topologically, residues Cys157–Thr172 are extracellular. Residues Trp173 to Tyr193 form a helical membrane-spanning segment. Topologically, residues Arg194–Trp196 are cytoplasmic. Residues Ser197–Ile217 form a helical membrane-spanning segment. The Extracellular portion of the chain corresponds to His218–Leu232. The helical transmembrane segment at Val233–Val253 threads the bilayer. Residues Glu254–Lys266 lie on the Cytoplasmic side of the membrane. Residues Tyr267–Val287 form a helical membrane-spanning segment. Residues Tyr288–Ala314 are Extracellular-facing. Residues Val315–Phe335 traverse the membrane as a helical segment. Topologically, residues Val336–Arg356 are cytoplasmic. A helical membrane pass occupies residues Leu357–Asn377. Residue Ser378 is a topological domain, extracellular. The chain crosses the membrane as a helical span at residues Ala379–Leu399. Residues Thr400–Tyr425 are Cytoplasmic-facing. Residues Val426–Ala446 traverse the membrane as a helical segment. At Ser447–Leu485 the chain is on the extracellular side.

This sequence belongs to the amino acid/polyamine transporter 2 family. Amino acid/auxin permease (AAAP) (TC 2.A.18.1) subfamily. In terms of tissue distribution, expressed in root and shoot apical tissues. In root apex, confined to stele initials, protophloem poles, statolith-containing S2 columella cells, lateral root cap cells (LRC), and in epidermal cells from the distal elongation zone (DEZ) up to central elongation zone (CEZ).

The protein resides in the cell membrane. With respect to regulation, auxin uptake mediated by AUX1 is inhibited by chromosaponin-1 (CSI), 1-naphthoxyacetic acid (1-NOA) and 3-chloro-4-hydroxyphenylacetic acid (CHPAA). Its function is as follows. Carrier protein involved in proton-driven auxin influx. Mediates the formation of auxin gradient from developing leaves (site of auxin biosynthesis) to tips by contributing to the loading of auxin in vascular tissues and facilitating acropetal (base to tip) auxin transport within inner tissues of the root apex, and basipetal (tip to base) auxin transport within outer tissues of the root apex. Unloads auxin from the mature phloem to deliver the hormone to the root meristem via the protophloem cell files. Coordinated subcellular localization of AUX1 is regulated by a brefeldin A-sensitive (BFA) vesicle trafficking process. Involved in lateral root formation, trichoblast polarization and root hair elongation. Required for gravitropism and thigmotropism, especially in roots, by modulating responses to auxin, ethylene and cytokinins such as benzyladenine (BA). Needed for ammonium-mediated root-growth inhibition. Confers sensitivity to the herbicide 2,4-dichlorophenoxyacetic acid (2,4-D, auxin analog), and to polar auxin transport inhibitors such as N-1-naphthylphthalamic acid (NPA) and 2,3,5-triiodobenzoic acid (TIBA). The sequence is that of Auxin transporter protein 1 (AUX1) from Arabidopsis thaliana (Mouse-ear cress).